Here is a 426-residue protein sequence, read N- to C-terminus: Gamma-glutamyl phosphate reductase (426 aa).

Belongs to the gamma-glutamyl phosphate reductase family.

The protein localises to the cytoplasm. It carries out the reaction L-glutamate 5-semialdehyde + phosphate + NADP(+) = L-glutamyl 5-phosphate + NADPH + H(+). It participates in amino-acid biosynthesis; L-proline biosynthesis; L-glutamate 5-semialdehyde from L-glutamate: step 2/2. In terms of biological role, catalyzes the NADPH-dependent reduction of L-glutamate 5-phosphate into L-glutamate 5-semialdehyde and phosphate. The product spontaneously undergoes cyclization to form 1-pyrroline-5-carboxylate. This Paracidovorax citrulli (strain AAC00-1) (Acidovorax citrulli) protein is Gamma-glutamyl phosphate reductase.